The following is a 91-amino-acid chain: PqqA binding protein 1 (91 aa).

This sequence belongs to the PqqD family. As to quaternary structure, monomer. Interacts with PqqE.

Its pathway is cofactor biosynthesis; pyrroloquinoline quinone biosynthesis. In terms of biological role, functions as a PqqA binding protein and presents PqqA to PqqE, in the pyrroloquinoline quinone (PQQ) biosynthetic pathway. The sequence is that of PqqA binding protein 1 (pqqD1) from Pseudomonas putida (strain ATCC 47054 / DSM 6125 / CFBP 8728 / NCIMB 11950 / KT2440).